The sequence spans 426 residues: Enolase (426 aa).

Gln-162 provides a ligand contact to (2R)-2-phosphoglycerate. Residue Glu-204 is the Proton donor of the active site. Mg(2+) contacts are provided by Asp-241, Glu-286, and Asp-313. (2R)-2-phosphoglycerate contacts are provided by Lys-338, Arg-367, Ser-368, and Lys-389. Residue Lys-338 is the Proton acceptor of the active site.

Belongs to the enolase family. The cofactor is Mg(2+).

It is found in the cytoplasm. Its subcellular location is the secreted. The protein resides in the cell surface. The catalysed reaction is (2R)-2-phosphoglycerate = phosphoenolpyruvate + H2O. The protein operates within carbohydrate degradation; glycolysis; pyruvate from D-glyceraldehyde 3-phosphate: step 4/5. Its function is as follows. Catalyzes the reversible conversion of 2-phosphoglycerate (2-PG) into phosphoenolpyruvate (PEP). It is essential for the degradation of carbohydrates via glycolysis. In Aliarcobacter butzleri (strain RM4018) (Arcobacter butzleri), this protein is Enolase.